An 80-amino-acid polypeptide reads, in one-letter code: Exodeoxyribonuclease 7 small subunit (80 aa).

It belongs to the XseB family. As to quaternary structure, heterooligomer composed of large and small subunits.

The protein resides in the cytoplasm. The catalysed reaction is Exonucleolytic cleavage in either 5'- to 3'- or 3'- to 5'-direction to yield nucleoside 5'-phosphates.. Its function is as follows. Bidirectionally degrades single-stranded DNA into large acid-insoluble oligonucleotides, which are then degraded further into small acid-soluble oligonucleotides. This is Exodeoxyribonuclease 7 small subunit from Rickettsia massiliae (strain Mtu5).